Here is a 62-residue protein sequence, read N- to C-terminus: Small ribosomal subunit protein eS27 (62 aa).

The Zn(2+) site is built by Cys17, Cys20, Cys36, and Cys39. A C4-type zinc finger spans residues 17-39 (CPECNNEQIVFGSPATVVKCLTC).

Belongs to the eukaryotic ribosomal protein eS27 family. As to quaternary structure, part of the 30S ribosomal subunit. Zn(2+) is required as a cofactor.

The polypeptide is Small ribosomal subunit protein eS27 (Methanocaldococcus jannaschii (strain ATCC 43067 / DSM 2661 / JAL-1 / JCM 10045 / NBRC 100440) (Methanococcus jannaschii)).